Here is a 215-residue protein sequence, read N- to C-terminus: 3-isopropylmalate dehydratase small subunit (215 aa).

It belongs to the LeuD family. LeuD type 1 subfamily. Heterodimer of LeuC and LeuD.

It carries out the reaction (2R,3S)-3-isopropylmalate = (2S)-2-isopropylmalate. The protein operates within amino-acid biosynthesis; L-leucine biosynthesis; L-leucine from 3-methyl-2-oxobutanoate: step 2/4. Functionally, catalyzes the isomerization between 2-isopropylmalate and 3-isopropylmalate, via the formation of 2-isopropylmaleate. This is 3-isopropylmalate dehydratase small subunit from Hahella chejuensis (strain KCTC 2396).